A 34-amino-acid chain; its full sequence is Peptidoglycan hydrolase P7 (34 aa).

Residues 10 to 26 (VLITLGVLAAVNKVSAL) form a helical membrane-spanning segment.

The protein localises to the virion membrane. Functionally, exolysin that catalyzes the cleavage of the host peptidoglycans during virus entry. This chain is Peptidoglycan hydrolase P7 (VII), found in Pseudoalteromonas espejiana (Bacteriophage PM2).